We begin with the raw amino-acid sequence, 962 residues long: Glycine dehydrogenase (decarboxylating) (962 aa).

Lys-709 carries the N6-(pyridoxal phosphate)lysine modification.

The protein belongs to the GcvP family. In terms of assembly, the glycine cleavage system is composed of four proteins: P, T, L and H. It depends on pyridoxal 5'-phosphate as a cofactor.

The catalysed reaction is N(6)-[(R)-lipoyl]-L-lysyl-[glycine-cleavage complex H protein] + glycine + H(+) = N(6)-[(R)-S(8)-aminomethyldihydrolipoyl]-L-lysyl-[glycine-cleavage complex H protein] + CO2. In terms of biological role, the glycine cleavage system catalyzes the degradation of glycine. The P protein binds the alpha-amino group of glycine through its pyridoxal phosphate cofactor; CO(2) is released and the remaining methylamine moiety is then transferred to the lipoamide cofactor of the H protein. The chain is Glycine dehydrogenase (decarboxylating) from Shewanella loihica (strain ATCC BAA-1088 / PV-4).